Here is a 259-residue protein sequence, read N- to C-terminus: UPF0246 protein NMA1114 (259 aa).

This sequence belongs to the UPF0246 family.

The polypeptide is UPF0246 protein NMA1114 (Neisseria meningitidis serogroup A / serotype 4A (strain DSM 15465 / Z2491)).